A 313-amino-acid polypeptide reads, in one-letter code: tRNA dimethylallyltransferase (313 aa).

An ATP-binding site is contributed by 11–18 (GPTACGKT). 13-18 (TACGKT) lines the substrate pocket. Interaction with substrate tRNA stretches follow at residues 36–39 (DSAL), 160–164 (QRIGR), and 243–248 (RCVGYR).

This sequence belongs to the IPP transferase family. As to quaternary structure, monomer. The cofactor is Mg(2+).

The catalysed reaction is adenosine(37) in tRNA + dimethylallyl diphosphate = N(6)-dimethylallyladenosine(37) in tRNA + diphosphate. Catalyzes the transfer of a dimethylallyl group onto the adenine at position 37 in tRNAs that read codons beginning with uridine, leading to the formation of N6-(dimethylallyl)adenosine (i(6)A). The polypeptide is tRNA dimethylallyltransferase (Neisseria gonorrhoeae (strain ATCC 700825 / FA 1090)).